Here is a 584-residue protein sequence, read N- to C-terminus: Putative adenine deaminase BA_3032/GBAA_3032/BAS2818 (584 aa).

It belongs to the metallo-dependent hydrolases superfamily. Adenine deaminase family.

The catalysed reaction is adenine + H2O + H(+) = hypoxanthine + NH4(+). The sequence is that of Putative adenine deaminase BA_3032/GBAA_3032/BAS2818 from Bacillus anthracis.